Here is a 792-residue protein sequence, read N- to C-terminus: Oxidoreductase cns1 (792 aa).

In terms of assembly, interacts with cns2.

It localises to the lipid droplet. Its pathway is secondary metabolite biosynthesis. Functionally, oxidoreductase; part of the gene cluster that mediates the biosynthesis of cordycepin (COR) and pentostatin (PTN), two adenosine analogs with related bioactivity profiles as both mimic adenosine and can inhibit some of the processes that are adenosine dependent. Within the pathway, cns1 catalyzes the last step by converting the cns2 product 2'-carbonyl-3'-deoxyadenosine (2'-C-3'-dA) into cordycepin (3'-deoxyadenosine). The first step of cordycepin biosynthesis involves hydroxyl phosphorylation of the 3'-OH position on adenosine to produce adenosine-3'-monophosphate (3'-AMP), catalyzed by kinase activity of cns3. Next, 3'-AMP is dephosphorylated to 2'-carbonyl-3'-deoxyadenosine by cns2, which is finally converted to cordycepin by the oxidoreductase cns1. Pentostatin production is mediated by the ATP phosphoribosyltransferase activity of cns3 on adenosine to inhibit the activity of adenosine deaminase (ADA) to prevent COR deamination to 3'-deoxyinosine (3'-dI). The protein is Oxidoreductase cns1 of Cordyceps militaris (strain CM01) (Caterpillar fungus).